A 220-amino-acid polypeptide reads, in one-letter code: Probable metallo-hydrolase YybB (220 aa).

Zn(2+)-binding residues include histidine 67, histidine 69, aspartate 71, histidine 72, histidine 139, aspartate 158, and histidine 200.

Belongs to the metallo-beta-lactamase superfamily. Zn(2+) is required as a cofactor.

In Bacillus subtilis (strain 168), this protein is Probable metallo-hydrolase YybB (yybB).